Consider the following 465-residue polypeptide: uncharacterized protein (465 aa).

A TRAM domain is found at 13-71; that stretch reads GPRPGLRLELQAIDLDRDGHGLARWQGWVVVVPGLLPGERAKVQLQQRQKSRWLSRISE. [4Fe-4S] cluster is bound by residues cysteine 84, cysteine 90, cysteine 93, and cysteine 171. Glutamine 294, tyrosine 324, glutamate 345, and aspartate 391 together coordinate S-adenosyl-L-methionine. Cysteine 418 serves as the catalytic Nucleophile.

This sequence belongs to the class I-like SAM-binding methyltransferase superfamily. RNA M5U methyltransferase family.

This is an uncharacterized protein from Parasynechococcus marenigrum (strain WH8102).